The primary structure comprises 463 residues: MSLTLWQQCLARLQDELPATEFSMWIRPLQAELNDNTLALYAPNRFVLDWVRDKYLNNINALLNEFCGANVPLLRFEVGSKPVAQAISQPVMVSAHASAPGVVSRPAPTRPSWDNVPALAELSYRSNVNTKHNFDNFVEGKSNQLARAAARQVADNPGGAYNPLFLYGGTGLGKTHLLHAVGNGIMARKPNAKVVYMHSERFVQDMVKALQNNAIEEFKRYYRSVDALLIDDIQFFANKERSQEEFFHTFNALLEGNQQIILTSDRYPKEINGVEDRLKSRFGWGLTVAIEPPELETRVAILMKKADENDIRLPGEVAFFIAKRLRSNVRELEGALNRVIANANFTGRAITIDFVREALRDLLALQEKLVTIDNIQKTVAEYYKIKVADLLSKRRSRSVARPRQMAMAMAKELTNHSLPEIGDAFGGRDHTTVLHACRKIEQLREESHDIKEDFSNLIRTLSS.

Positions 1–83 (MSLTLWQQCL…LRFEVGSKPV (83 aa)) are domain I, interacts with DnaA modulators. Residues 83–126 (VAQAISQPVMVSAHASAPGVVSRPAPTRPSWDNVPALAELSYRS) form a domain II region. A domain III, AAA+ region region spans residues 127-343 (NVNTKHNFDN…GALNRVIANA (217 aa)). Residues Gly-171, Gly-173, Lys-174, and Thr-175 each contribute to the ATP site. The domain IV, binds dsDNA stretch occupies residues 344 to 463 (NFTGRAITID…FSNLIRTLSS (120 aa)).

Belongs to the DnaA family. Oligomerizes as a right-handed, spiral filament on DNA at oriC.

The protein localises to the cytoplasm. Plays an essential role in the initiation and regulation of chromosomal replication. ATP-DnaA binds to the origin of replication (oriC) to initiate formation of the DNA replication initiation complex once per cell cycle. Binds the DnaA box (a 9 base pair repeat at the origin) and separates the double-stranded (ds)DNA. Forms a right-handed helical filament on oriC DNA; dsDNA binds to the exterior of the filament while single-stranded (ss)DNA is stabiized in the filament's interior. The ATP-DnaA-oriC complex binds and stabilizes one strand of the AT-rich DNA unwinding element (DUE), permitting loading of DNA polymerase. After initiation quickly degrades to an ADP-DnaA complex that is not apt for DNA replication. Binds acidic phospholipids. The chain is Chromosomal replication initiator protein DnaA from Erwinia tasmaniensis (strain DSM 17950 / CFBP 7177 / CIP 109463 / NCPPB 4357 / Et1/99).